We begin with the raw amino-acid sequence, 260 residues long: MTAETERIGVKGGMEYSFGFTKIDEAQKQSMVDGVFHSVAENYDKMNDILSLGLHRMWKNSMVAWLSPPAVFHWKVLDVAGGTGDIAFRILNASRQKAHATVLDINGSMLSVGKKRAEKNGLAPLIDFVEANAEHLPFEDQSFDAYTIAFGIRNVPHIDQALREAFRVLKPGGRFLCLEFSNVEMPLLDKIYDLWSFHAIPKLGQLIANDGDAYRYLVESIRKFPKQDDFAHMINHVGFSRVSYRNLTGAIAALHSAWKI.

Residues threonine 83, aspartate 104, and 132-133 (NA) each bind S-adenosyl-L-methionine.

It belongs to the class I-like SAM-binding methyltransferase superfamily. MenG/UbiE family.

It catalyses the reaction a 2-demethylmenaquinol + S-adenosyl-L-methionine = a menaquinol + S-adenosyl-L-homocysteine + H(+). It carries out the reaction a 2-methoxy-6-(all-trans-polyprenyl)benzene-1,4-diol + S-adenosyl-L-methionine = a 5-methoxy-2-methyl-3-(all-trans-polyprenyl)benzene-1,4-diol + S-adenosyl-L-homocysteine + H(+). It functions in the pathway quinol/quinone metabolism; menaquinone biosynthesis; menaquinol from 1,4-dihydroxy-2-naphthoate: step 2/2. It participates in cofactor biosynthesis; ubiquinone biosynthesis. Functionally, methyltransferase required for the conversion of demethylmenaquinol (DMKH2) to menaquinol (MKH2) and the conversion of 2-polyprenyl-6-methoxy-1,4-benzoquinol (DDMQH2) to 2-polyprenyl-3-methyl-6-methoxy-1,4-benzoquinol (DMQH2). This Bartonella henselae (strain ATCC 49882 / DSM 28221 / CCUG 30454 / Houston 1) (Rochalimaea henselae) protein is Ubiquinone/menaquinone biosynthesis C-methyltransferase UbiE.